A 385-amino-acid chain; its full sequence is Putative cell agglutination protein pfl8 (385 aa).

The first 20 residues, 1–20 (MNSYISLIFTLLFFTSAARS), serve as a signal peptide directing secretion. Residues 41–90 (SSEFTSTITPETPSSSSSTFVPISTHTSSATNTTSGQLSISSSSSTSSEY) are disordered. N-linked (GlcNAc...) asparagine glycosylation is found at Asn72, Asn270, and Asn346. Positions 196–360 (EVSTFNKPAY…GPVRTTSYSY (165 aa)) constitute a PA14 domain.

It is found in the secreted. It localises to the cell surface. In terms of biological role, may be involved in agglutination during conjugation or other aspects of colony formation. Induces flocculation when overexpressed. In Schizosaccharomyces pombe (strain 972 / ATCC 24843) (Fission yeast), this protein is Putative cell agglutination protein pfl8.